A 127-amino-acid polypeptide reads, in one-letter code: Small ribosomal subunit protein uS11 (127 aa).

This sequence belongs to the universal ribosomal protein uS11 family. As to quaternary structure, part of the 30S ribosomal subunit. Interacts with proteins S7 and S18. Binds to IF-3.

Its function is as follows. Located on the platform of the 30S subunit, it bridges several disparate RNA helices of the 16S rRNA. Forms part of the Shine-Dalgarno cleft in the 70S ribosome. The sequence is that of Small ribosomal subunit protein uS11 from Chlorobium limicola (strain DSM 245 / NBRC 103803 / 6330).